The following is a 63-amino-acid chain: MKKQEIKKLSKDEVIKNIDKLKKDLFNFRFQKINSQVTDPSKIGQTKKTIARLKTTLKGKLNA.

The protein belongs to the universal ribosomal protein uL29 family.

The sequence is that of Large ribosomal subunit protein uL29 from Pelagibacter ubique (strain HTCC1062).